The following is a 470-amino-acid chain: 24-hydroxycholesterol 7-alpha-hydroxylase (470 aa).

The next 2 membrane-spanning stretches (helical) occupy residues 3-23 and 270-290; these read IMEL…LFLF and VVLW…LGYI. Cys-415 is a binding site for heme.

The protein belongs to the cytochrome P450 family. It depends on heme as a cofactor. As to expression, liver specific. Hepatic expression is sexually dimorphic (female &gt; male).

The protein localises to the endoplasmic reticulum membrane. It localises to the microsome membrane. The catalysed reaction is (24S)-hydroxycholesterol + reduced [NADPH--hemoprotein reductase] + O2 = (24S)-7alpha-dihydroxycholesterol + oxidized [NADPH--hemoprotein reductase] + H2O + H(+). It functions in the pathway steroid metabolism; cholesterol degradation. Its pathway is lipid metabolism; bile acid biosynthesis. A cytochrome P450 monooxygenase involved in neural cholesterol clearance through bile acid synthesis. Catalyzes 7-alpha hydroxylation of (24S)-hydroxycholesterol, a neural oxysterol that is metabolized to bile acids in the liver. Mechanistically, uses molecular oxygen inserting one oxygen atom into a substrate, and reducing the second into a water molecule, with two electrons provided by NADPH via cytochrome P450 reductase (CPR; NADPH-ferrihemoprotein reductase). This chain is 24-hydroxycholesterol 7-alpha-hydroxylase (Cyp39a1), found in Mus musculus (Mouse).